The sequence spans 141 residues: Probable mitochondrial pyruvate carrier 1 (141 aa).

2 helical membrane passes run 31–52 (YLCS…AAIL) and 60–82 (LISG…YAWM).

The protein belongs to the mitochondrial pyruvate carrier (MPC) (TC 2.A.105) family. The functional 150 kDa pyruvate import complex is a heteromer of mpc1 and mpc2.

Its subcellular location is the mitochondrion. It localises to the mitochondrion inner membrane. In terms of biological role, mediates the uptake of pyruvate into mitochondria. The sequence is that of Probable mitochondrial pyruvate carrier 1 from Schizosaccharomyces pombe (strain 972 / ATCC 24843) (Fission yeast).